A 100-amino-acid polypeptide reads, in one-letter code: Small ribosomal subunit protein uS14c (100 aa).

The protein belongs to the universal ribosomal protein uS14 family. Part of the 30S ribosomal subunit.

The protein resides in the plastid. It localises to the chloroplast. Functionally, binds 16S rRNA, required for the assembly of 30S particles. The protein is Small ribosomal subunit protein uS14c of Thalassiosira pseudonana (Marine diatom).